The following is a 109-amino-acid chain: Large ribosomal subunit protein uL18c (109 aa).

The protein belongs to the universal ribosomal protein uL18 family. Part of the 50S ribosomal subunit; contacts the 5S rRNA.

It localises to the plastid. The protein localises to the chloroplast. Binds 5S rRNA, forms part of the central protuberance of the 50S subunit. This is Large ribosomal subunit protein uL18c (rpl18) from Cyanidioschyzon merolae (strain NIES-3377 / 10D) (Unicellular red alga).